The following is a 1391-amino-acid chain: DNA-directed RNA polymerase subunit beta'' (1391 aa).

Positions 224, 295, 302, and 305 each coordinate Zn(2+).

This sequence belongs to the RNA polymerase beta' chain family. RpoC2 subfamily. In plastids the minimal PEP RNA polymerase catalytic core is composed of four subunits: alpha, beta, beta', and beta''. When a (nuclear-encoded) sigma factor is associated with the core the holoenzyme is formed, which can initiate transcription. It depends on Zn(2+) as a cofactor.

The protein localises to the plastid. The protein resides in the chloroplast. It carries out the reaction RNA(n) + a ribonucleoside 5'-triphosphate = RNA(n+1) + diphosphate. Functionally, DNA-dependent RNA polymerase catalyzes the transcription of DNA into RNA using the four ribonucleoside triphosphates as substrates. In Buxus microphylla (Littleleaf boxwood), this protein is DNA-directed RNA polymerase subunit beta''.